We begin with the raw amino-acid sequence, 499 residues long: Ammonium transporter MEP2 (499 aa).

Over 1 to 31 (MSYNFTGTPTGEGTGGNSLTTDLNTQFDLAN) the chain is Extracellular. A glycan (N-linked (GlcNAc...) asparagine) is linked at asparagine 4. Residues 32–52 (MGWIGVASAGVWIMVPGIGLL) form a helical membrane-spanning segment. The Cytoplasmic portion of the chain corresponds to 53 to 62 (YSGLSRKKHA). The helical transmembrane segment at 63–83 (LSLLWASMMASAVCIFQWFFW) threads the bilayer. Topologically, residues 84-122 (GYSLAFSHNTRGNGFIGTLEFFGFRNVLGAPSSVSSLPD) are extracellular. The helical transmembrane segment at 123–143 (ILFAVYQGMFAAVTGALMLGG) threads the bilayer. Topologically, residues 144–152 (ACERARLFP) are cytoplasmic. A helical transmembrane segment spans residues 153 to 173 (MMVFLFLWMTIVYCPIACWVW). Topologically, residues 174–187 (NAEGWLVKLGSLDY) are extracellular. Residues 188–208 (AGGLCVHLTSGHGGLVYALIL) form a helical membrane-spanning segment. Residues 209–230 (GKRNDPVTRKGMPKYKPHSVTS) are Cytoplasmic-facing. The helical transmembrane segment at 231 to 251 (VVLGTVFLWFGWMFFNGGSAG) threads the bilayer. Residues 252-257 (NATIRA) lie on the Extracellular side of the membrane. A helical membrane pass occupies residues 258–278 (WYSIMSTNLAAACGGLTWMVI). Topologically, residues 279 to 289 (DYFRCGRKWTT) are cytoplasmic. Residues 290–312 (VGLCSGIIAGLVGITPAAGFVPI) traverse the membrane as a helical segment. Topologically, residues 313-315 (WSA) are extracellular. A helical transmembrane segment spans residues 316-338 (VVIGVVTGAGCNLAVDLKSLLRI). Topologically, residues 339 to 346 (DDGLDCYS) are cytoplasmic. Residues 347 to 367 (IHGVGGCIGSVLTGIFAADYV) form a helical membrane-spanning segment. The Extracellular portion of the chain corresponds to 368–393 (NATAGSYISPIDGGWINHHYKQVGYQ). The helical transmembrane segment at 394-414 (LAGICAALAWTVTVTSILLLT) threads the bilayer. At 415-499 (MNAIPFLKLR…SSTKNTDHIV (85 aa)) the chain is on the cytoplasmic side. The interval 428 to 441 (DEEELGTDAAQIGE) is enhancer domain. Residues 442 to 449 (FTYEESTA) are linker domain. The tract at residues 450 to 485 (YIPEPIRSKTSAQMPPPHENIDDKIVGNTDAEKNST) is autoinhibitory domain. The interval 455 to 499 (IRSKTSAQMPPPHENIDDKIVGNTDAEKNSTPSDASSTKNTDHIV) is disordered. Serine 457 is subject to Phosphoserine. Positions 468–482 (ENIDDKIVGNTDAEK) are enriched in basic and acidic residues. Residues 483-493 (NSTPSDASSTK) are compositionally biased toward polar residues.

Belongs to the ammonia transporter channel (TC 1.A.11.2) family. Phosphorylated at Ser-457 by the TORC1 effector kinase NPR1 under nitrogen-limiting conditions which causes a conformational change in the C-terminal region (CTR) to form an open active conformation. Supplementation of nitrogen source leads to inactivation and instant Ser-457 dephosphorylation via plasma membrane PSR1 and PSR2 redundant phosphatases. Post-translationally, the residue Asn-4 of the protein's N-terminal tail is the only site that is glycosylated.

The protein resides in the cell membrane. Transporter for ammonium (both charged and uncharged NH3 and NH4) to use as a nitrogen source. The affinity of MEP2 is about twenty times higher than that of MEP1. MEP3 has the lowest affinity. Under ammonium limitation acts as an ammonium sensor, generating a signal that leads to pseudohyphal (filamentous) growth. The polypeptide is Ammonium transporter MEP2 (Saccharomyces cerevisiae (strain ATCC 204508 / S288c) (Baker's yeast)).